Consider the following 85-residue polypeptide: Large ribosomal subunit protein bL27 (85 aa).

The disordered stretch occupies residues 1–20 (MATKKAGGSTKNGRDSNPKM).

Belongs to the bacterial ribosomal protein bL27 family.

The polypeptide is Large ribosomal subunit protein bL27 (Acinetobacter baumannii (strain AB307-0294)).